The primary structure comprises 206 residues: Small ribosomal subunit protein uS4 (206 aa).

Residues 96-156 enclose the S4 RNA-binding domain; it reads TRLDNVVYRM…EKSQKQARIK (61 aa).

The protein belongs to the universal ribosomal protein uS4 family. Part of the 30S ribosomal subunit. Contacts protein S5. The interaction surface between S4 and S5 is involved in control of translational fidelity.

In terms of biological role, one of the primary rRNA binding proteins, it binds directly to 16S rRNA where it nucleates assembly of the body of the 30S subunit. Functionally, with S5 and S12 plays an important role in translational accuracy. The sequence is that of Small ribosomal subunit protein uS4 from Shewanella loihica (strain ATCC BAA-1088 / PV-4).